The following is a 163-amino-acid chain: ATP synthase subunit b 1 (163 aa).

The chain crosses the membrane as a helical span at residues Phe-5–Leu-25.

The protein belongs to the ATPase B chain family. As to quaternary structure, F-type ATPases have 2 components, F(1) - the catalytic core - and F(0) - the membrane proton channel. F(1) has five subunits: alpha(3), beta(3), gamma(1), delta(1), epsilon(1). F(0) has three main subunits: a(1), b(2) and c(10-14). The alpha and beta chains form an alternating ring which encloses part of the gamma chain. F(1) is attached to F(0) by a central stalk formed by the gamma and epsilon chains, while a peripheral stalk is formed by the delta and b chains.

It is found in the cell inner membrane. Its function is as follows. F(1)F(0) ATP synthase produces ATP from ADP in the presence of a proton or sodium gradient. F-type ATPases consist of two structural domains, F(1) containing the extramembraneous catalytic core and F(0) containing the membrane proton channel, linked together by a central stalk and a peripheral stalk. During catalysis, ATP synthesis in the catalytic domain of F(1) is coupled via a rotary mechanism of the central stalk subunits to proton translocation. In terms of biological role, component of the F(0) channel, it forms part of the peripheral stalk, linking F(1) to F(0). The polypeptide is ATP synthase subunit b 1 (Rhizobium leguminosarum bv. trifolii (strain WSM2304)).